The primary structure comprises 154 residues: Xanthine-guanine phosphoribosyltransferase (154 aa).

5-phospho-alpha-D-ribose 1-diphosphate is bound by residues Arg37 to Gly38, Arg69, and Glu88 to Thr96. Arg69 contacts GMP. Asp89 lines the Mg(2+) pocket. Positions 92 and 135 each coordinate guanine. Positions 92 and 135 each coordinate xanthine. GMP contacts are provided by residues Asp92 to Thr96 and Trp134 to Ile135.

The protein belongs to the purine/pyrimidine phosphoribosyltransferase family. XGPT subfamily. Homotetramer. It depends on Mg(2+) as a cofactor.

It is found in the cell inner membrane. It catalyses the reaction GMP + diphosphate = guanine + 5-phospho-alpha-D-ribose 1-diphosphate. It carries out the reaction XMP + diphosphate = xanthine + 5-phospho-alpha-D-ribose 1-diphosphate. The catalysed reaction is IMP + diphosphate = hypoxanthine + 5-phospho-alpha-D-ribose 1-diphosphate. Its pathway is purine metabolism; GMP biosynthesis via salvage pathway; GMP from guanine: step 1/1. It functions in the pathway purine metabolism; XMP biosynthesis via salvage pathway; XMP from xanthine: step 1/1. In terms of biological role, purine salvage pathway enzyme that catalyzes the transfer of the ribosyl-5-phosphate group from 5-phospho-alpha-D-ribose 1-diphosphate (PRPP) to the N9 position of the 6-oxopurines guanine and xanthine to form the corresponding ribonucleotides GMP (guanosine 5'-monophosphate) and XMP (xanthosine 5'-monophosphate), with the release of PPi. To a lesser extent, also acts on hypoxanthine. This is Xanthine-guanine phosphoribosyltransferase from Vibrio vulnificus (strain CMCP6).